Here is an 89-residue protein sequence, read N- to C-terminus: Extender of the chronological lifespan protein ecl3 (89 aa).

The protein belongs to the ecl1 family.

The protein resides in the nucleus. Its function is as follows. Involved in chronological cell aging. In Schizosaccharomyces pombe (strain 972 / ATCC 24843) (Fission yeast), this protein is Extender of the chronological lifespan protein ecl3 (ecl3).